Consider the following 268-residue polypeptide: Tryptophan synthase alpha chain (268 aa).

Active-site proton acceptor residues include Glu49 and Asp60.

It belongs to the TrpA family. Tetramer of two alpha and two beta chains.

The enzyme catalyses (1S,2R)-1-C-(indol-3-yl)glycerol 3-phosphate + L-serine = D-glyceraldehyde 3-phosphate + L-tryptophan + H2O. Its pathway is amino-acid biosynthesis; L-tryptophan biosynthesis; L-tryptophan from chorismate: step 5/5. Functionally, the alpha subunit is responsible for the aldol cleavage of indoleglycerol phosphate to indole and glyceraldehyde 3-phosphate. The sequence is that of Tryptophan synthase alpha chain from Escherichia coli (strain SMS-3-5 / SECEC).